Consider the following 500-residue polypeptide: Glutamyl-tRNA(Gln) amidotransferase subunit A (500 aa).

Residues Lys93 and Ser168 each act as charge relay system in the active site. The Acyl-ester intermediate role is filled by Ser192.

This sequence belongs to the amidase family. GatA subfamily. Heterotrimer of A, B and C subunits.

The enzyme catalyses L-glutamyl-tRNA(Gln) + L-glutamine + ATP + H2O = L-glutaminyl-tRNA(Gln) + L-glutamate + ADP + phosphate + H(+). Its function is as follows. Allows the formation of correctly charged Gln-tRNA(Gln) through the transamidation of misacylated Glu-tRNA(Gln) in organisms which lack glutaminyl-tRNA synthetase. The reaction takes place in the presence of glutamine and ATP through an activated gamma-phospho-Glu-tRNA(Gln). The sequence is that of Glutamyl-tRNA(Gln) amidotransferase subunit A from Corynebacterium jeikeium (strain K411).